The sequence spans 312 residues: DNA-directed RNA polymerase subunit alpha (312 aa).

Residues 1 to 226 are alpha N-terminal domain (alpha-NTD); it reads MIEFEKPNIT…EHFKVFESAD (226 aa). The interval 243 to 312 is alpha C-terminal domain (alpha-CTD); that stretch reads KEKKLEMTIE…DLGLSLRQED (70 aa).

Belongs to the RNA polymerase alpha chain family. In terms of assembly, homodimer. The RNAP catalytic core consists of 2 alpha, 1 beta, 1 beta' and 1 omega subunit. When a sigma factor is associated with the core the holoenzyme is formed, which can initiate transcription.

The enzyme catalyses RNA(n) + a ribonucleoside 5'-triphosphate = RNA(n+1) + diphosphate. Functionally, DNA-dependent RNA polymerase catalyzes the transcription of DNA into RNA using the four ribonucleoside triphosphates as substrates. The protein is DNA-directed RNA polymerase subunit alpha of Lactobacillus acidophilus (strain ATCC 700396 / NCK56 / N2 / NCFM).